A 439-amino-acid polypeptide reads, in one-letter code: Xylose isomerase (439 aa).

Catalysis depends on residues His-101 and Asp-104. Residues Glu-232, Glu-268, His-271, Asp-296, Asp-307, Asp-309, and Asp-339 each coordinate Mg(2+).

This sequence belongs to the xylose isomerase family. Homotetramer. It depends on Mg(2+) as a cofactor.

It is found in the cytoplasm. The catalysed reaction is alpha-D-xylose = alpha-D-xylulofuranose. This chain is Xylose isomerase, found in Haemophilus influenzae (strain 86-028NP).